We begin with the raw amino-acid sequence, 288 residues long: MTQHFIVIGNPIAHSKSPEIHTLFGAHAGLDICYQCQYCPDDPASFTAVIEAFFHGGGVGANVTVPFKQVAYECCAARGGLSEHAKIAGAVNTLSLNQALLASGVSRAEALYGDNTDGQGLVNHMQRLGWPLNGARIAIIGAGGAARGVVLPLIEAGIEALTIANRTLSKATELVNELSTASVVIHNQQIQTCCTADLSGDFDIIVNATSIGLSGETLPLADELNCQYAYDMMYGRELPFLQHFAARGAQTSDGYGMLIGQAALSFECWTGHAIDVTQATAALEKSSI.

Shikimate is bound by residues 15–17 (SKS) and Thr-64. Lys-68 acts as the Proton acceptor in catalysis. Glu-83 contributes to the NADP(+) binding site. Shikimate contacts are provided by Asn-92 and Asp-117. Residues 141 to 145 (GAGGA), 165 to 170 (NRTLSK), and Met-232 contribute to the NADP(+) site. Tyr-234 contributes to the shikimate binding site. Gly-254 lines the NADP(+) pocket.

This sequence belongs to the shikimate dehydrogenase family. In terms of assembly, homodimer.

It carries out the reaction shikimate + NADP(+) = 3-dehydroshikimate + NADPH + H(+). The protein operates within metabolic intermediate biosynthesis; chorismate biosynthesis; chorismate from D-erythrose 4-phosphate and phosphoenolpyruvate: step 4/7. Functionally, involved in the biosynthesis of the chorismate, which leads to the biosynthesis of aromatic amino acids. Catalyzes the reversible NADPH linked reduction of 3-dehydroshikimate (DHSA) to yield shikimate (SA). The sequence is that of Shikimate dehydrogenase (NADP(+)) from Psychrobacter arcticus (strain DSM 17307 / VKM B-2377 / 273-4).